We begin with the raw amino-acid sequence, 437 residues long: Phosphomethylpyrimidine synthase (437 aa).

Residues N69, M98, Y127, H163, 185–187 (SRG), 226–229 (DACR), and E265 each bind substrate. Residue H269 coordinates Zn(2+). Y292 lines the substrate pocket. A Zn(2+)-binding site is contributed by H333. The [4Fe-4S] cluster site is built by C409, C412, and C416.

This sequence belongs to the ThiC family. Requires [4Fe-4S] cluster as cofactor.

The enzyme catalyses 5-amino-1-(5-phospho-beta-D-ribosyl)imidazole + S-adenosyl-L-methionine = 4-amino-2-methyl-5-(phosphooxymethyl)pyrimidine + CO + 5'-deoxyadenosine + formate + L-methionine + 3 H(+). The protein operates within cofactor biosynthesis; thiamine diphosphate biosynthesis. Its function is as follows. Catalyzes the synthesis of the hydroxymethylpyrimidine phosphate (HMP-P) moiety of thiamine from aminoimidazole ribotide (AIR) in a radical S-adenosyl-L-methionine (SAM)-dependent reaction. In Clostridium botulinum (strain ATCC 19397 / Type A), this protein is Phosphomethylpyrimidine synthase.